We begin with the raw amino-acid sequence, 313 residues long: MILNFIYYFILILMVLLSIAFFTLMERKFLGYCHIRKGPNKTGAMGLLQPISDALKLFSKEMNKMFYMNKFIQIISPLIMILMMMMMWMIFYFSNNALNLNMSIIFFLCISSLASYAILFSGWSSNSKYSLIGSYRGFAQVISYEVSMAMILISLAIIPQSYNFISFLKIQETFPLIFSFLPIFIIWIITVLAELNRVPFDLAEGESELVSGFNIEYGSWLFAIIFMSEYGDIMMISFLTYYLFLGLKNLILFFVLILMTMIIMIRGTYVRMRYDQLMMMAWKMILPQSIIFLFLSYFIFLNINNFICINFCN.

8 consecutive transmembrane segments (helical) span residues 2-22 (ILNF…IAFF), 71-91 (FIQI…WMIF), 103-123 (SIIF…FSGW), 138-158 (FAQV…LAII), 173-193 (TFPL…TVLA), 220-240 (WLFA…SFLT), 243-263 (LFLG…TMII), and 289-309 (SIIF…FICI).

This sequence belongs to the complex I subunit 1 family.

The protein localises to the mitochondrion inner membrane. It carries out the reaction a ubiquinone + NADH + 5 H(+)(in) = a ubiquinol + NAD(+) + 4 H(+)(out). Core subunit of the mitochondrial membrane respiratory chain NADH dehydrogenase (Complex I) that is believed to belong to the minimal assembly required for catalysis. Complex I functions in the transfer of electrons from NADH to the respiratory chain. The immediate electron acceptor for the enzyme is believed to be ubiquinone. This chain is NADH-ubiquinone oxidoreductase chain 1 (ND1), found in Rhipicephalus sanguineus (Brown dog tick).